The chain runs to 378 residues: MYKLDLAPDPKELAAIEARRNREKERQCRFFNVRNRVMGVDVEALNYQVEERKFREAIERSKDMAYGAKHAHYDLVAQMLEKEEAERACRLSKRVQDFREQRQQFKNGHEFDFWDPDHVQEFQVPYYENEAYFGPASMQYFLGEDLERASHLRMQQEQLRYNLEKQLQEQQAAREEEARAALLSDQLRLAADTRAAELARLEESCRAAMRTAMANANKAQAAKQALLQRREQQQQQEANLAEIKKQVTSDLLTENPQVAQRPSAPHRVLPYCWKGMTAEQRAAIRKTQENQRQEKKEQRQAEKLVEAEWGSQSKRLAEAALELEEQERELCAEFRRGLGSFNRELAKEQHAQQNYLNSVIYTNQPTSHYYLQFNTSSR.

2 coiled-coil regions span residues 153 to 250 (RMQQ…VTSD) and 279 to 334 (EQRA…CAEF).

The protein belongs to the RIB43A family. Microtubule inner protein component of sperm flagellar doublet microtubules.

The protein localises to the cytoplasm. It is found in the cytoskeleton. The protein resides in the flagellum axoneme. This is RIB43A-like with coiled-coils protein 1 (Ribc1) from Rattus norvegicus (Rat).